Here is a 478-residue protein sequence, read N- to C-terminus: Septin-4 (478 aa).

2 disordered regions span residues 40–74 (DFSGNESCHPPEAKTWASRPQVLEPRPQAPDLYDD) and 87–115 (ADNQQYFCAPAPLSPSARPRSPWGKLDPY). Residues 95 to 108 (APAPLSPSARPRSP) show a composition bias toward low complexity. Residues Ser117 and Ser118 each carry the phosphoserine modification. Positions 141–414 (KGFDFTLMVA…ENYRAQCIQS (274 aa)) constitute a Septin-type G domain. The G1 motif stretch occupies residues 151–158 (GESGLGKS). GTP-binding positions include 151–158 (GESGLGKS) and Thr185. The segment at 208-211 (DTPG) is G3 motif. The G4 motif stretch occupies residues 289 to 292 (AKAD). 290–298 (KADTLTPPE) contributes to the GTP binding site. Ser325 bears the Phosphoserine mark. GTP contacts are provided by Gly348 and Arg363. The tract at residues 428-448 (LTRESGTDFPIPAVPPGTDPE) is disordered. The residue at position 432 (Ser432) is a Phosphoserine. Position 434 is a phosphothreonine (Thr434). The stretch at 446–478 (DPETEKLIREKDEELRRMQEILHKIQKQMKETY) forms a coiled coil.

The protein belongs to the TRAFAC class TrmE-Era-EngA-EngB-Septin-like GTPase superfamily. Septin GTPase family. Septins polymerize into heterooligomeric protein complexes that form filaments, and can associate with cellular membranes, actin filaments and microtubules. GTPase activity is required for filament formation. Interacts with SEPTIN8. Component of a septin core octameric complex consisting of SEPTIN12, SEPTIN7, SEPTIN6 and SEPTIN2 or SEPTIN4 in the order 12-7-6-2-2-6-7-12 or 12-7-6-4-4-6-7-12. Interacts with SEPTIN14 (via C-terminus). Interacts with DYRK1A. Interacts with SLC6A3/DAT and SNCA/alpha-synuclein. Interacts with STX1A; in the striatum. Interacts with XIAP (via BIR3 domain) following the induction of apoptosis. Interacts with AREL1 (via HECT domain); in the cytoplasm following induction of apoptosis. In terms of processing, ubiquitinated by AREL1. Post-translationally, phosphorylated by DYRK1A.

The protein resides in the cytoplasm. It localises to the cell projection. The protein localises to the cilium. Its subcellular location is the flagellum. It is found in the cytoplasmic vesicle. The protein resides in the secretory vesicle. It localises to the axon. The protein localises to the dendrite. Its subcellular location is the perikaryon. It is found in the synapse. Filament-forming cytoskeletal GTPase. Pro-apoptotic protein involved in LGR5-positive intestinal stem cell and Paneth cell expansion in the intestines, via its interaction with XIAP. May also play a role in the regulation of cell fate in the intestine. Positive regulator of apoptosis involved in hematopoietic stem cell homeostasis; via its interaction with XIAP. Negative regulator of repair and hair follicle regeneration in response to injury, due to inhibition of hair follicle stem cell proliferation, potentially via its interaction with XIAP. Plays an important role in male fertility and sperm motility. During spermiogenesis, essential for the establishment of the annulus (a fibrous ring structure connecting the midpiece and the principal piece of the sperm flagellum) which is a requisite for the structural and mechanical integrity of the sperm. Involved in the migration of cortical neurons and the formation of neuron leading processes during embryonic development. Required for dopaminergic metabolism in presynaptic autoreceptors; potentially via activity as a presynaptic scaffold protein. This is Septin-4 from Macaca fascicularis (Crab-eating macaque).